The following is a 155-amino-acid chain: Nuclear cap-binding protein subunit 2 (155 aa).

MRNA contacts are provided by residues tyrosine 19, tyrosine 42, 111-115 (RTDWD), 122-126 (RQYGR), and 132-133 (QV). In terms of domain architecture, RRM spans 39 to 117 (NTLYVGNLSF…RIIRTDWDAG (79 aa)). The interval 122 to 155 (RQYGRGKSGGQVRDEYRQDYDPARGGYGKVVARP) is disordered. Positions 133–143 (VRDEYRQDYDP) are enriched in basic and acidic residues.

The protein belongs to the RRM NCBP2 family. As to quaternary structure, component of the nuclear cap-binding complex (CBC), a heterodimer composed of ncbp1/cbp80 and ncbp2/cbp20 that interacts with m7GpppG-capped RNA.

The protein localises to the nucleus. It localises to the cytoplasm. In terms of biological role, component of the cap-binding complex (CBC), which binds co-transcriptionally to the 5' cap of pre-mRNAs and is involved in various processes such as pre-mRNA splicing, translation regulation, nonsense-mediated mRNA decay, RNA-mediated gene silencing (RNAi) by microRNAs (miRNAs) and mRNA export. The CBC complex is involved in mRNA export from the nucleus, leading to the recruitment of the mRNA export machinery to the 5' end of mRNA and to mRNA export in a 5' to 3' direction through the nuclear pore. The CBC complex is also involved in mediating U snRNA and intronless mRNAs export from the nucleus. The CBC complex is essential for a pioneer round of mRNA translation, before steady state translation when the CBC complex is replaced by cytoplasmic cap-binding protein eIF4E. The pioneer round of mRNA translation mediated by the CBC complex plays a central role in nonsense-mediated mRNA decay (NMD), NMD only taking place in mRNAs bound to the CBC complex, but not on eIF4E-bound mRNAs. The CBC complex enhances NMD in mRNAs containing at least one exon-junction complex (EJC), promoting the interaction between upf1 and upf2. The CBC complex is also involved in 'failsafe' NMD, which is independent of the EJC complex, while it does not participate in Staufen-mediated mRNA decay (SMD). During cell proliferation, the CBC complex is also involved in microRNAs (miRNAs) biogenesis via its interaction with srrt/ars2, thereby being required for miRNA-mediated RNA interference. The CBC complex also acts as a negative regulator of parn, thereby acting as an inhibitor of mRNA deadenylation. In the CBC complex, ncbp2/cbp20 recognizes and binds capped RNAs (m7GpppG-capped RNA) but requires ncbp1/cbp80 to stabilize the movement of its N-terminal loop and lock the CBC into a high affinity cap-binding state with the cap structure. The conventional cap-binding complex with NCBP2 binds both small nuclear RNA (snRNA) and messenger (mRNA) and is involved in their export from the nucleus. This chain is Nuclear cap-binding protein subunit 2 (ncbp2), found in Esox lucius (Northern pike).